The following is a 236-amino-acid chain: 2,3,4,5-tetrahydropyridine-2,6-dicarboxylate N-acetyltransferase (236 aa).

The protein belongs to the transferase hexapeptide repeat family. DapH subfamily.

It carries out the reaction (S)-2,3,4,5-tetrahydrodipicolinate + acetyl-CoA + H2O = L-2-acetamido-6-oxoheptanedioate + CoA. It functions in the pathway amino-acid biosynthesis; L-lysine biosynthesis via DAP pathway; LL-2,6-diaminopimelate from (S)-tetrahydrodipicolinate (acetylase route): step 1/3. In terms of biological role, catalyzes the transfer of an acetyl group from acetyl-CoA to tetrahydrodipicolinate. This is 2,3,4,5-tetrahydropyridine-2,6-dicarboxylate N-acetyltransferase from Clostridium botulinum (strain Eklund 17B / Type B).